A 276-amino-acid chain; its full sequence is Large ribosomal subunit protein uL2 (276 aa).

Disordered regions lie at residues 1-50 and 206-276; these read MPIK…GRVT and GKAG…SKKR. Residues 7 to 19 are compositionally biased toward polar residues; that stretch reads RPTTPTRRFQTVV. The span at 20–38 shows a compositional bias: basic and acidic residues; the sequence is SREDITKQTPEKSLVESKK.

This sequence belongs to the universal ribosomal protein uL2 family. Part of the 50S ribosomal subunit. Forms a bridge to the 30S subunit in the 70S ribosome.

Functionally, one of the primary rRNA binding proteins. Required for association of the 30S and 50S subunits to form the 70S ribosome, for tRNA binding and peptide bond formation. It has been suggested to have peptidyltransferase activity; this is somewhat controversial. Makes several contacts with the 16S rRNA in the 70S ribosome. This Solibacter usitatus (strain Ellin6076) protein is Large ribosomal subunit protein uL2.